Consider the following 254-residue polypeptide: TLC domain-containing protein At5g14285 (254 aa).

The next 6 membrane-spanning stretches (helical) occupy residues Asp12 to Phe32, Ser45 to Phe65, Thr82 to Phe101, Phe124 to Ser144, Leu172 to Phe192, and Trp211 to Ile231. Positions Gln38 to Arg248 constitute a TLC domain.

Its subcellular location is the membrane. In Arabidopsis thaliana (Mouse-ear cress), this protein is TLC domain-containing protein At5g14285.